A 156-amino-acid polypeptide reads, in one-letter code: Ribonuclease H (156 aa).

Residues 1–142 enclose the RNase H type-1 domain; sequence MNKQVEIFTD…CDELARQAAE (142 aa). Residues Asp-10, Glu-48, Asp-70, and Asp-134 each coordinate Mg(2+). The disordered stretch occupies residues 135-156; the sequence is ELARQAAENPTEDDIGYQPEPQ.

It belongs to the RNase H family. Monomer. The cofactor is Mg(2+).

It is found in the cytoplasm. It catalyses the reaction Endonucleolytic cleavage to 5'-phosphomonoester.. Endonuclease that specifically degrades the RNA of RNA-DNA hybrids. The chain is Ribonuclease H from Vibrio cholerae serotype O1 (strain M66-2).